A 344-amino-acid chain; its full sequence is Leucine-rich repeat-containing protein 75A (344 aa).

Residues 1 to 25 (MGTRQTKGSLAERASPGAAPGPRRE) form a disordered region. The segment covering 11–21 (AERASPGAAPG) has biased composition (low complexity). LRR repeat units follow at residues 204–217 (VDSV…LTDD) and 229–242 (LPRL…GNRL). The disordered stretch occupies residues 295-344 (LPTILELGEGPGSGEEVREGTVGQEDPGGGPVAPAEDHHEGKETVAAAQT).

Belongs to the LRRC75 family.

This is Leucine-rich repeat-containing protein 75A (LRRC75A) from Homo sapiens (Human).